Consider the following 2565-residue polypeptide: MTRKFVKRSIFLHLLRHQPANAQIGLMEGNTFCTTLQPRLFTMDLNVVEHKVFYTELLNLCEAEDSALTKLPCYKSLPSLVPLRIAALNALAACNYLPQSREKIIAALFKALNSTNSELQEAGEACMRKFLEGATIEVDQIHTHMRPLLMMLGDYRSLTLNVVNRLTSVTRLFPNSFNDKFCDQMMQHLRKWMEVVVITHKGGQRSDGNEMKICSAIINLFHLIPAAPQTLVKPPLEVVMETERAMLIEAGSPFREPLIKFLTRHPSQTVELFMMGATLNDPQWSRMFMSFLKHKDARPLRDVLAANPNRFITLLLPGGAQTAVRPGSSSTSNMRLDLQFQAIKIISIIVKNDDAWLASQHSLVSQLRRVWVSETFQERHRKENMAATNWKEPKLLAFCLLNYCKRNYGDIELLFQLLRAFTGRFLCNMTFLKEYMEEEIPKNYSIAQKRALFFRFVEFNDPNFGDELKAKVLQHILNPAFLYSFEKGEGEQLLGPPNPEGDNPESITSVFITKVLDPEKQADMLDSLRIYLLQYATLLVEHAPHHIHDNNKNRNSKLRRLMTFAWPCLLSKACVDPACRYSGHLLLAHIIAKFAIHKKIVLQVFHSLLKAHAMEARAIVRQAMAILTPAVPARMEDGHQMLTHWTRKIIVEEGHTVPQLVHILHPIVQHFKVYYPVRHHLVQHMVSAMQRLGFTPSVTIEQRRLAVDLSEVVIKWELQRIKDQQPDSDMDPNSSGEGVNSVSIKRGLSVDSAQEVKRFRAATGAISAVFGRSQSLPGADSLLAKPIDKQHTDTVVNFLIRVACQVNDNTNTAGSPGEVLSRRCVNLLKTALRPDMWCKSELKLQWFDKLLMTVEQPNQVNYGNICTGLEVLNFLLTVLQSPAILSSFKPLQRGIAACMTCGNTKVLRAVHSLLSRLMSIFPTEPSTSSVASKYEELECLYAAVGKVIYEGLTNYEKATSANPSQLFGTLMIHKSACCNNPSYIDRLISVFMRSLQKMVREHLNPQTASGSTEATAAGTSELVMLSLDLVKTRLAVMSMEMRKNFIQTILTSLIEKSPDAKILRAVVKIVEEWVKNNSPMAANQTPTLREKSILLVKMMTYIEKRFPEDLELNAQFLDLVNYVYRDEALSGSELTAKLEPAFLSGLRCAQPLIRAKFFEVFDNSMKRRVYERLLYVTCSQNWEAMGSHFWIKQCIELLLAVCEKSTAIGTSCQGAMLPSITNVINLADSHDRAAFAMVTHVKQEPRERENSESKEEDVEIDIELAPGDQTSTPKTKELSEKDIGNQLHMLTNRHDKFLDTLREVKTGALLSAFVQLCHISTTLAEKTWVQLFPRLWKILSDRQQHALAGEISPFLCSGSHQVQRDCQPSALNCFVEAMSQCVPPIPMRPCVLKYLGKTHNLWFRSTLMLEHQAFEKGLSLPIKPKQTTEFYEQESITPPQQEILDSLAELYSLLQEEDMWAGLWQKRCKFSETATAIAYEQHGFFEQAQESYEKAMDKAKKEHERSNASPAIFPEYQLWEDHWIRCSKELNQWEALTEFGQSKGHINPYLVLECAWRVSNWTAMKEALVQVEVSCPKEMAWKVNMYRGYLAICHPEEQQLSFIERLVEMASSLAIREWRRLPHVVSHVHTPLLQAAQQIIELQEAAQINAGLQPTNLGRNNSLHDMKTVVKTWRNRLPIVSDDLSHWSSVFMWRQHHYQAIVTAYENSSHHDPSSNNAMLGVHASASAIIQYGKIARKQGLVNVALDILSRIHTIPTVPIVDCFQKIRQQVKCYLQLAGVMGKNECMQGLEVIESTNLKYFTKEMTAEFYALKGMFLAQINKSEEANKAFSAAVQMHDVLVKAWAMWGDYLESIFVKERQLHLGVSAITCYLHACRHQNESKSRKYLAKVLWLLSFDDDKNTLADAVDKYCIGVPPIQWLAWIPQLLTCLVGSEGKLLLNLISQVGRVYPQAVYFPIRTLYLTLKIEQRERYKSDSGQQQPSSAGNQSHSASDPGPIRATAPMWRCSRIMHMQRELHPTLLSSLEGIVDQMVWFRENWHEEVLRQLQQGLAKCYSVAFEKSGAVSDAKITPHTLNFVKKLVSTFGVGLENVSNVSTMFSSAASESLARRAQATAQDPVFQKLKGQFTTDFDFSVPGSMKLHNLISKLKKWIKILEAKTKQLPKFFLIEEKCRFLSNFSAQTAEVEIPGEFLMPKPTHYYIKIARFMPRVEIVQKHNTAARRLHIRGHNGKIYPYLVMNDACLTESRREERVLQLLRLLNPCLEKRKETTKRHLFFTVPRVVAVSPQMRLVEDNPSSLSLVEIYKQRCAKKGIEHDNPISRYYDRLATVQARGTQASHQVLRDILKEVQSNMVPRSMLKEWALHTFPNATDYWTFRKMFTIQLALIGFAEFVLHLNRLNPEMLQIAQDTGKLNVAYFRFDINDATGDLDANRPVPFRLTPNISEFLTTIGVSGPLTASMIAVARCFAQPNFKVDGVLKTVLRDEIIAWHKKTQEDTSSPLSAAGQPENMDSQQLVSLVQKAVTAIMTRLHNLAQFDGGESKVNTLVAAANSLDNLCRMDPAWHPWL.

Phosphoserine occurs at positions 328, 749, and 775. The segment at 710 to 1087 is interaction with TP53; it reads SEVVIKWELQ…SPMAANQTPT (378 aa). Positions 745 to 760 match the Bipartite nuclear localization signal motif; sequence KRGLSVDSAQEVKRFR. A Glycyl lysine isopeptide (Lys-Gly) (interchain with G-Cter in SUMO2) cross-link involves residue K1242. Basic and acidic residues predominate over residues 1242–1253; that stretch reads KQEPRERENSES. Positions 1242–1277 are disordered; the sequence is KQEPRERENSESKEEDVEIDIELAPGDQTSTPKTKE. An FAT domain is found at 1391–1963; sequence VLKYLGKTHN…YFPIRTLYLT (573 aa). An N6-acetyllysine modification is found at K1766. Positions 1973–1995 are disordered; sequence KSDSGQQQPSSAGNQSHSASDPG. Residues 1975-1991 show a composition bias toward polar residues; sequence DSGQQQPSSAGNQSHSA. Residues 2206–2529 form the PI3K/PI4K catalytic domain; sequence MPRVEIVQKH…AVTAIMTRLH (324 aa). Residues 2212 to 2218 are G-loop; it reads VQKHNTA. A catalytic loop region spans residues 2393–2401; sequence HLNRLNPEM. Residues 2413–2438 form an activation loop region; the sequence is VAYFRFDINDATGDLDANRPVPFRLT. The 33-residue stretch at 2533–2565 folds into the FATC domain; that stretch reads QFDGGESKVNTLVAAANSLDNLCRMDPAWHPWL.

It belongs to the PI3/PI4-kinase family. TRA1 subfamily. As to quaternary structure, interacts with MYC, E2F1 and E2F4 transcription factors. Interacts directly with p53/TP53. Interacts with GCN5L2. Component of various HAT complexes. Component of the PCAF complex, at least composed of TADA2L/ADA2, SUPT3H, TADA3L/ADA3, TAF5L/PAF65-beta, TAF6L/PAF65-alpha, TAF10/TAFII30, TAF12/TAFII20, TAF9/TAFII31 and TRRAP. Component of the TFTC-HAT complex, at least composed of TAF5L, TAF6L, TADA3L, SUPT3H/SPT3, TAF2/TAFII150, TAF4/TAFII135, TAF5/TAFII100, GCN5L2/GCN5, TAF10 and TRRAP. Component of the NuA4 histone acetyltransferase complex which contains the catalytic subunit KAT5/TIP60 and the subunits EP400, TRRAP/PAF400, BRD8/SMAP, EPC1, DMAP1/DNMAP1, RUVBL1/TIP49, RUVBL2, ING3, actin, ACTL6A/BAF53A, MORF4L1/MRG15, MORF4L2/MRGX, MRGBP, YEATS4/GAS41, VPS72/YL1 and MEAF6. Component of the STAGA complex, at least composed of SUPT3H, GCN5L2, SUPT7L, TAF5L, TAF6L, TADA3L, TAD1L, TAF10, TAF12, TRRAP and TAF9. The STAGA core complex is associated with a subcomplex required for histone deubiquitination composed of ATXN7L3, ENY2 and USP22. Component of the BAF53 complex, at least composed of BAF53A, RUVBL1, SMARCA4/BRG1, and TRRAP, which preferentially acetylates histone H4 (and H2A) within nucleosomes. Interacts with NPAT. Interaction with TELO2 and TTI1. Component of a SWR1-like complex. As to expression, expressed in the cochlea.

It localises to the nucleus. In terms of biological role, adapter protein, which is found in various multiprotein chromatin complexes with histone acetyltransferase activity (HAT), which gives a specific tag for epigenetic transcription activation. Component of the NuA4 histone acetyltransferase complex which is responsible for acetylation of nucleosomal histones H4 and H2A. Plays a central role in MYC transcription activation, and also participates in cell transformation by MYC. Required for p53/TP53-, E2F1- and E2F4-mediated transcription activation. Probably acts by linking transcription factors such as E1A, MYC or E2F1 to HAT complexes such as STAGA thereby allowing transcription activation. Probably not required in the steps following histone acetylation in processes of transcription activation. May be required for the mitotic checkpoint and normal cell cycle progression. Component of a SWR1-like complex that specifically mediates the removal of histone H2A.Z/H2AZ1 from the nucleosome. May play a role in the formation and maintenance of the auditory system. The sequence is that of Transformation/transcription domain-associated protein (Trrap) from Mus musculus (Mouse).